The primary structure comprises 189 residues: Coatomer subunit zeta (189 aa).

Belongs to the adaptor complexes small subunit family. Oligomeric complex that consists of at least the alpha, beta, beta', gamma, delta, epsilon and zeta subunits.

It localises to the cytoplasm. Its subcellular location is the golgi apparatus membrane. The protein localises to the cytoplasmic vesicle. It is found in the COPI-coated vesicle membrane. Its function is as follows. The coatomer is a cytosolic protein complex that binds to dilysine motifs and reversibly associates with Golgi non-clathrin-coated vesicles, which further mediate biosynthetic protein transport from the ER, via the Golgi up to the trans Golgi network. Coatomer complex is required for budding from Golgi membranes, and is essential for the retrograde Golgi-to-ER transport of dilysine-tagged proteins. The zeta subunit may be involved in regulating the coat assembly and, hence, the rate of biosynthetic protein transport due to its association-dissociation properties with the coatomer complex. The chain is Coatomer subunit zeta (RET3) from Saccharomyces cerevisiae (strain ATCC 204508 / S288c) (Baker's yeast).